The chain runs to 221 residues: Large ribosomal subunit protein uL3 (221 aa).

This sequence belongs to the universal ribosomal protein uL3 family. Part of the 50S ribosomal subunit. Forms a cluster with proteins L14 and L19.

One of the primary rRNA binding proteins, it binds directly near the 3'-end of the 23S rRNA, where it nucleates assembly of the 50S subunit. The chain is Large ribosomal subunit protein uL3 from Chlamydia muridarum (strain MoPn / Nigg).